The primary structure comprises 475 residues: Bystin (475 aa).

Basic residues-rich tracts occupy residues 1–12 (MGKDVKKVHKLR) and 29–41 (KPHKRVGKLRKKK). 2 disordered regions span residues 1-57 (MGKD…ESVI) and 106-149 (DFID…QFGV). Composition is skewed to acidic residues over residues 45-54 (ENDTGIDETE) and 107-119 (FIDDDDDDEDADQ).

Belongs to the bystin family.

Its subcellular location is the nucleus. It localises to the nucleolus. Functionally, required for processing of 20S pre-rRNA precursor and biogenesis of 40S ribosomal subunits. This is Bystin (bysl) from Dictyostelium discoideum (Social amoeba).